The following is a 216-amino-acid chain: 3-isopropylmalate dehydratase small subunit (216 aa).

It belongs to the LeuD family. LeuD type 1 subfamily. As to quaternary structure, heterodimer of LeuC and LeuD.

It carries out the reaction (2R,3S)-3-isopropylmalate = (2S)-2-isopropylmalate. The protein operates within amino-acid biosynthesis; L-leucine biosynthesis; L-leucine from 3-methyl-2-oxobutanoate: step 2/4. Its function is as follows. Catalyzes the isomerization between 2-isopropylmalate and 3-isopropylmalate, via the formation of 2-isopropylmaleate. The protein is 3-isopropylmalate dehydratase small subunit of Burkholderia mallei (strain NCTC 10247).